Here is a 515-residue protein sequence, read N- to C-terminus: Putative BTB/POZ domain-containing protein At3g49970 (515 aa).

The 63-residue stretch at methionine 1–threonine 63 folds into the BTB domain. The NPH3 domain maps to aspartate 149–alanine 409. Phosphotyrosine is present on tyrosine 350. The disordered stretch occupies residues glutamine 395–glutamate 417. A coiled-coil region spans residues leucine 418 to glutamate 452. The tract at residues isoleucine 494 to serine 515 is disordered.

Belongs to the NPH3 family.

Its pathway is protein modification; protein ubiquitination. Its function is as follows. May act as a substrate-specific adapter of an E3 ubiquitin-protein ligase complex (CUL3-RBX1-BTB) which mediates the ubiquitination and subsequent proteasomal degradation of target proteins. This chain is Putative BTB/POZ domain-containing protein At3g49970, found in Arabidopsis thaliana (Mouse-ear cress).